A 315-amino-acid polypeptide reads, in one-letter code: Manganese-dependent 2,3-dihydroxybiphenyl 1,2-dioxygenase (315 aa).

VOC domains follow at residues 7–121 (KFGH…IYYD) and 150–273 (RIDH…LFSG). Mn(2+)-binding residues include histidine 153, histidine 216, and glutamate 269.

Belongs to the extradiol ring-cleavage dioxygenase family. Homotetramer. Mn(2+) serves as cofactor.

The catalysed reaction is biphenyl-2,3-diol + O2 = 2-hydroxy-6-oxo-6-phenylhexa-2,4-dienoate + H(+). It functions in the pathway xenobiotic degradation; biphenyl degradation; 2-hydroxy-2,4-pentadienoate and benzoate from biphenyl: step 3/4. Functionally, catalyzes the meta-cleavage of the hydroxylated biphenyl ring. The enzyme can oxidize a wide range of substrates, and the substrate preference order is 2,3-dihydroxybiphenyl &gt; 3-methylcatechol &gt; catechol &gt; 4-methylcatechol &gt; 4-chlorocatechol. This Geobacillus genomosp. 3 protein is Manganese-dependent 2,3-dihydroxybiphenyl 1,2-dioxygenase (bphC).